The chain runs to 1013 residues: Probable outer membrane protein PmpG (1013 aa).

A signal peptide spans 1 to 27; the sequence is MQTSFHKFFLSMILAYSCCSLSGGGYA. In terms of domain architecture, Autotransporter spans 733 to 1013; it reads GRSYCRGLWV…GLSAGSKVRF (281 aa).

Belongs to the PMP outer membrane protein family.

Its subcellular location is the secreted. It is found in the cell wall. It localises to the cell outer membrane. This Chlamydia trachomatis serovar D (strain ATCC VR-885 / DSM 19411 / UW-3/Cx) protein is Probable outer membrane protein PmpG (pmpG).